The sequence spans 131 residues: MSMSDPIADMLTRIRNAQAVEKASVVMPSSKLKVAIAKVLKDEGYIDDFAVTEQGGKASLTIGLKYYAGRPVIERLERVSKPGLRVYKGRNEIPQVMNGLGVAIISTPQGLMTDRRARATGVGGEVICYVA.

The protein belongs to the universal ribosomal protein uS8 family. As to quaternary structure, part of the 30S ribosomal subunit. Contacts proteins S5 and S12.

Its function is as follows. One of the primary rRNA binding proteins, it binds directly to 16S rRNA central domain where it helps coordinate assembly of the platform of the 30S subunit. This Ralstonia nicotianae (strain ATCC BAA-1114 / GMI1000) (Ralstonia solanacearum) protein is Small ribosomal subunit protein uS8.